Consider the following 117-residue polypeptide: uncharacterized protein (117 aa).

This is an uncharacterized protein from Microplitis demolitor bracovirus (isolate Webb) (MdBV).